A 253-amino-acid chain; its full sequence is 23S rRNA (cytidine-2'-O)-methyltransferase TlyA (253 aa).

In terms of domain architecture, S4 RNA-binding spans 1-73 (MRFDFFVSKR…LKLDLLSEIY (73 aa)).

This sequence belongs to the TlyA family.

It carries out the reaction cytidine(1920) in 23S rRNA + S-adenosyl-L-methionine = 2'-O-methylcytidine(1920) in 23S rRNA + S-adenosyl-L-homocysteine + H(+). Catalyzes the 2'-O-methylation at nucleotide C1920 in 23S rRNA. Enhances motility. Enhances biofilm formation. Involved in the assembly of 70S ribosomes. Involved in virulence by promoting adherence and invasion to host cells. Involved in pathogenicity by modulating secretion of host-protective chemokine interleukin 8 (IL-8). Involved in susceptibility to antibiotic capreomycin. The chain is 23S rRNA (cytidine-2'-O)-methyltransferase TlyA from Campylobacter jejuni subsp. jejuni serotype O:23/36 (strain 81-176).